The chain runs to 798 residues: uncharacterized protein (798 aa).

Over residues 1 to 13 (MSSSQSPSTPSAS) the composition is skewed to low complexity. A chloroplast-targeting transit peptide spans 1–58 (MSSSQSPSTPSASLVDSSDSKHPDDLPQIYKRRSVWTSSEDAVSSSNSPEQTTPFTVR). 3 disordered regions span residues 1–99 (MSSS…WQDA), 135–158 (AEKK…SMCT), and 417–473 (TGLI…AEPS). The span at 35-55 (VWTSSEDAVSSSNSPEQTTPF) shows a compositional bias: polar residues. The span at 57-79 (VREDTNADIARELDLPDDPEPHL) shows a compositional bias: basic and acidic residues. Residues 137 to 146 (KKKRKKKKKA) show a composition bias toward basic residues. The segment covering 462–473 (AAPAEAQGAEPS) has biased composition (low complexity). Residues 578–658 (RSNMEVAGKL…MLSEARGLRD (81 aa)) adopt a coiled-coil conformation. Residues 749–798 (DDLKAPAPEPAPLSPGGHRSVESLADEAGITDQAGSLLPAKDNRPSEDLD) are disordered. Ser-762 carries the phosphoserine modification. Residues 789–798 (KDNRPSEDLD) are compositionally biased toward basic and acidic residues.

It is found in the plastid. It localises to the chloroplast. This is an uncharacterized protein from Arabidopsis thaliana (Mouse-ear cress).